A 263-amino-acid chain; its full sequence is Phosphate import ATP-binding protein PstB (263 aa).

Positions 17-258 constitute an ABC transporter domain; that stretch reads IDVRDLNFYY…PRRKETEDYI (242 aa). ATP is bound at residue 49 to 56; sequence GPSGCGKS.

The protein belongs to the ABC transporter superfamily. Phosphate importer (TC 3.A.1.7) family. As to quaternary structure, the complex is composed of two ATP-binding proteins (PstB), two transmembrane proteins (PstC and PstA) and a solute-binding protein (PstS).

The protein resides in the cell inner membrane. It carries out the reaction phosphate(out) + ATP + H2O = ADP + 2 phosphate(in) + H(+). In terms of biological role, part of the ABC transporter complex PstSACB involved in phosphate import. Responsible for energy coupling to the transport system. The chain is Phosphate import ATP-binding protein PstB from Ralstonia nicotianae (strain ATCC BAA-1114 / GMI1000) (Ralstonia solanacearum).